A 943-amino-acid chain; its full sequence is uncharacterized protein (943 aa).

Position 1 is an N-acetylmethionine (Met1). Disordered regions lie at residues 37 to 63 (DETPISRNGNDSNINIQPSSVPQQQQQ), 152 to 177 (KHQFGKSKKNTKGTGGGGDGDDDDEV), 315 to 381 (LPMN…QQLQ), 397 to 472 (QNVP…PLKK), and 515 to 546 (EREALVEEKEKERAEKNTEANEEEEISHESDD). The segment covering 41–58 (ISRNGNDSNINIQPSSVP) has biased composition (polar residues). Residues 152-162 (KHQFGKSKKNT) are compositionally biased toward basic residues. Residues 318–358 (NNYNNHPGQFQNTPPVMPSGQQPPQQPRTLSLTNGPRYSPQ) show a composition bias toward polar residues. A compositionally biased stretch (low complexity) spans 367-381 (QQISQRQQQQQQQLQ). Polar residues predominate over residues 397–409 (QNVPQGFNPWSPN). Residues 417-433 (SMKQPISQSSISSKNNS) are compositionally biased toward low complexity. Positions 434–470 (AYSIPNVQNNSLTTFSPSSPTDATAMPNSTKQGSSPL) are enriched in polar residues. The span at 515–533 (EREALVEEKEKERAEKNTE) shows a compositional bias: basic and acidic residues. Phosphoserine occurs at positions 553, 586, and 619. The tract at residues 616–639 (EFPSPGKYNSNSDNGEMNTTNEVD) is disordered. Over residues 622-639 (KYNSNSDNGEMNTTNEVD) the composition is skewed to polar residues. Phosphoserine is present on Ser649. The interval 654–683 (IPERDPKRNVSDATIKRRESDGNGRRLSNV) is disordered. Positions 655-677 (PERDPKRNVSDATIKRRESDGNG) are enriched in basic and acidic residues. A phosphoserine mark is found at Ser681, Ser766, and Ser771.

This is an uncharacterized protein from Saccharomyces cerevisiae (strain ATCC 204508 / S288c) (Baker's yeast).